The primary structure comprises 217 residues: Uracil-DNA glycosylase (217 aa).

D62 functions as the Proton acceptor in the catalytic mechanism.

It belongs to the uracil-DNA glycosylase (UDG) superfamily. UNG family.

It localises to the cytoplasm. The catalysed reaction is Hydrolyzes single-stranded DNA or mismatched double-stranded DNA and polynucleotides, releasing free uracil.. Excises uracil residues from the DNA which can arise as a result of misincorporation of dUMP residues by DNA polymerase or due to deamination of cytosine. This chain is Uracil-DNA glycosylase, found in Streptococcus equi subsp. equi (strain 4047).